Consider the following 30-residue polypeptide: V-type proton ATPase catalytic subunit A isoform 1 (30 aa).

The protein belongs to the ATPase alpha/beta chains family. As to quaternary structure, V-ATPase is a heteromultimeric enzyme composed of a peripheral catalytic V1 complex (main components: subunits A, B, C, D, E, and F) attached to an integral membrane V0 proton pore complex (main component: the proteolipid protein).

It catalyses the reaction ATP + H2O + 4 H(+)(in) = ADP + phosphate + 5 H(+)(out). In terms of biological role, catalytic subunit of the peripheral V1 complex of vacuolar ATPase. V-ATPase vacuolar ATPase is responsible for acidifying a variety of intracellular compartments in eukaryotic cells. The chain is V-type proton ATPase catalytic subunit A isoform 1 from Equisetum arvense (Field horsetail).